The primary structure comprises 269 residues: Phosphonoacetaldehyde hydrolase (269 aa).

Asp10 acts as the Nucleophile in catalysis. Residues Asp10 and Ala12 each coordinate Mg(2+). Lys52 serves as the catalytic Schiff-base intermediate with substrate. Asp186 contacts Mg(2+).

This sequence belongs to the HAD-like hydrolase superfamily. PhnX family. In terms of assembly, homodimer. Requires Mg(2+) as cofactor.

The enzyme catalyses phosphonoacetaldehyde + H2O = acetaldehyde + phosphate + H(+). Its function is as follows. Involved in phosphonate degradation. The chain is Phosphonoacetaldehyde hydrolase from Salmonella heidelberg (strain SL476).